Consider the following 494-residue polypeptide: Nuclear distribution protein PAC1 (494 aa).

The LisH domain maps to 14-46 (QKNELDKSVLRYLNWNYKQTVRHEHAQDYESVR). Positions 90–123 (NSIVRLQKKIIELEQNTETLVSQIKDLNTQVSEL) form a coiled coil. WD repeat units follow at residues 153 to 192 (NVES…IPLA), 196 to 244 (SHTK…CKFQ), 251 to 292 (GHEH…SLKT), 295 to 334 (PHSQ…SVGT), 347 to 395 (HFIE…LMAH), 415 to 454 (GHLS…HVWE), and 457 to 492 (HTGF…SNVF).

Belongs to the WD repeat LIS1/nudF family. As to quaternary structure, self-associates. Interacts with NDL1 and dynein.

It is found in the cytoplasm. It localises to the cytoskeleton. Its subcellular location is the spindle pole. In terms of biological role, positively regulates the activity of the minus-end directed microtubule motor protein dynein. Plays a central role in positioning the mitotic spindle at the bud neck during cell division. Targets cytoplasmic dynein to microtubule plus ends, thereby promoting dynein-mediated microtubule sliding along the bud cortex and consequently the movement of the mitotic spindle to the bud neck. In Saccharomyces cerevisiae (strain RM11-1a) (Baker's yeast), this protein is Nuclear distribution protein PAC1.